The chain runs to 468 residues: UDP-N-acetylmuramate--L-alanine ligase (468 aa).

112 to 118 (GTHGKTT) lines the ATP pocket.

The protein belongs to the MurCDEF family.

The protein resides in the cytoplasm. The catalysed reaction is UDP-N-acetyl-alpha-D-muramate + L-alanine + ATP = UDP-N-acetyl-alpha-D-muramoyl-L-alanine + ADP + phosphate + H(+). The protein operates within cell wall biogenesis; peptidoglycan biosynthesis. In terms of biological role, cell wall formation. The chain is UDP-N-acetylmuramate--L-alanine ligase from Neisseria meningitidis serogroup C (strain 053442).